A 252-amino-acid polypeptide reads, in one-letter code: Ribosomal RNA small subunit methyltransferase A (252 aa).

Residues Asn-11, Leu-13, Gly-38, Glu-60, Asp-82, and Asn-99 each contribute to the S-adenosyl-L-methionine site.

The protein belongs to the class I-like SAM-binding methyltransferase superfamily. rRNA adenine N(6)-methyltransferase family. RsmA subfamily.

The protein resides in the cytoplasm. It carries out the reaction adenosine(1518)/adenosine(1519) in 16S rRNA + 4 S-adenosyl-L-methionine = N(6)-dimethyladenosine(1518)/N(6)-dimethyladenosine(1519) in 16S rRNA + 4 S-adenosyl-L-homocysteine + 4 H(+). Specifically dimethylates two adjacent adenosines (A1518 and A1519) in the loop of a conserved hairpin near the 3'-end of 16S rRNA in the 30S particle. May play a critical role in biogenesis of 30S subunits. The protein is Ribosomal RNA small subunit methyltransferase A of Hydrogenobaculum sp. (strain Y04AAS1).